Reading from the N-terminus, the 1014-residue chain is Regulator of telomere elongation helicase 1 homolog (1014 aa).

One can recognise a Helicase ATP-binding domain in the interval 7-324 (AGIPVHFPFE…KEMLLELEKA (318 aa)). An ATP-binding site is contributed by 42-49 (SPTGTGKT). [4Fe-4S] cluster is bound by residues C147, C165, C174, and C210. A DEAH box motif is present at residues 253–256 (DEAH). T873 carries the post-translational modification Phosphothreonine. The segment at 891-917 (TDMVKTEPGTSNSCSYGNTSSSGSDSR) is disordered. Positions 899-917 (GTSNSCSYGNTSSSGSDSR) are enriched in low complexity.

It belongs to the helicase family. RAD3/XPD subfamily.

It localises to the nucleus. The catalysed reaction is ATP + H2O = ADP + phosphate + H(+). In terms of biological role, a probable ATP-dependent DNA helicase implicated in DNA repair and the maintenance of genomic stability. Acts as an anti-recombinase to counteract toxic recombination and limit crossover during meiosis. Regulates meiotic recombination and crossover homeostasis by physically dissociating strand invasion events and thereby promotes noncrossover repair by meiotic synthesis dependent strand annealing (SDSA) as well as disassembly of D loop recombination intermediates. The sequence is that of Regulator of telomere elongation helicase 1 homolog from Drosophila mojavensis (Fruit fly).